We begin with the raw amino-acid sequence, 248 residues long: 3-deoxy-manno-octulosonate cytidylyltransferase (248 aa).

Belongs to the KdsB family.

Its subcellular location is the cytoplasm. It carries out the reaction 3-deoxy-alpha-D-manno-oct-2-ulosonate + CTP = CMP-3-deoxy-beta-D-manno-octulosonate + diphosphate. The protein operates within nucleotide-sugar biosynthesis; CMP-3-deoxy-D-manno-octulosonate biosynthesis; CMP-3-deoxy-D-manno-octulosonate from 3-deoxy-D-manno-octulosonate and CTP: step 1/1. It functions in the pathway bacterial outer membrane biogenesis; lipopolysaccharide biosynthesis. Functionally, activates KDO (a required 8-carbon sugar) for incorporation into bacterial lipopolysaccharide in Gram-negative bacteria. The sequence is that of 3-deoxy-manno-octulosonate cytidylyltransferase from Desulfosudis oleivorans (strain DSM 6200 / JCM 39069 / Hxd3) (Desulfococcus oleovorans).